The sequence spans 506 residues: Maturase K (506 aa).

The protein belongs to the intron maturase 2 family. MatK subfamily.

Its subcellular location is the plastid. It is found in the chloroplast. Its function is as follows. Usually encoded in the trnK tRNA gene intron. Probably assists in splicing its own and other chloroplast group II introns. The chain is Maturase K from Arabis alpina (Alpine rock-cress).